The sequence spans 277 residues: MNFSKLVVRKMPAHLQKLTVKSKTKVKSLKKNEYYTIIPETAEQEKVKVAIPIGKQIRVRQGDFVKRGDQLDEGNFDPHDILAIKGPNALHEYLVSEVQEVYRLQGVHINDKHIEVVVRSMLRKVIITDSGDTSFVNQQQVDKFLFDEENDRVEKEGGSPAQGTPVLLGLTKASLNTESYFSAASFQETTKVLTDAAIKGKTDNLMGLKENVIIGHMIPAGTGMKKYRDIEVFKDLPGDLDWDLAIGGRGRRSFRTFRVGSCFHCHTLSTCCRRGRG.

The catalysed reaction is N(2)-acetyl-L-ornithine + H2O = L-ornithine + acetate. It functions in the pathway amino-acid biosynthesis; L-arginine biosynthesis; L-ornithine from N(2)-acetyl-L-ornithine (linear): step 1/1. The chain is Putative acetylornithine deacetylase (argE) from Leptospira biflexa.